The primary structure comprises 184 residues: ADP-ribosylation factor-like protein 2 (184 aa).

The N-myristoyl glycine moiety is linked to residue G2. Residues 23 to 30 (GLDNAGKT), 66 to 70 (DVGGQ), G68, and 125 to 128 (NKSD) each bind GTP.

Belongs to the small GTPase superfamily. Arf family.

The protein localises to the cytoplasm. The protein resides in the cell membrane. Its subcellular location is the cytoskeleton. It localises to the microtubule organizing center. It is found in the centrosome. Functionally, GTP-binding protein that functions in embryogenesis, cytokinesis, germline development and microtubulule cytoskeleton dynamics. The chain is ADP-ribosylation factor-like protein 2 (evl-20.1) from Caenorhabditis briggsae.